Here is a 313-residue protein sequence, read N- to C-terminus: Protoheme IX farnesyltransferase (313 aa).

Helical transmembrane passes span 29-49 (VISL…RGWP), 57-77 (LWLL…AGVF), 101-123 (LISS…VMLW), 124-144 (VWGT…YVVI), 157-177 (IVIG…AVTG), 185-205 (YLFA…ALMI), 225-245 (MTVA…LMPV), 247-267 (FGAV…WLLW), and 287-307 (AVPL…AGAI).

It belongs to the UbiA prenyltransferase family. Protoheme IX farnesyltransferase subfamily.

The protein localises to the cell membrane. It carries out the reaction heme b + (2E,6E)-farnesyl diphosphate + H2O = Fe(II)-heme o + diphosphate. It participates in porphyrin-containing compound metabolism; heme O biosynthesis; heme O from protoheme: step 1/1. Converts heme B (protoheme IX) to heme O by substitution of the vinyl group on carbon 2 of heme B porphyrin ring with a hydroxyethyl farnesyl side group. The chain is Protoheme IX farnesyltransferase from Deinococcus radiodurans (strain ATCC 13939 / DSM 20539 / JCM 16871 / CCUG 27074 / LMG 4051 / NBRC 15346 / NCIMB 9279 / VKM B-1422 / R1).